The chain runs to 511 residues: MPAPHGGILQDLIARDALKKNELLSEAQSSDILVWNLTPRQLCDIELILNGGFSPLTGFLNENDYSSVVTDSRLADGTLWTIPITLDVDEAFANQIKPDTRIALFQDDEIPIAILTVQDVYKPNKTIEAEKVFRGDPEHPAISYLFNVAGDYYVGGSLEAIQLPQHYDYPGLRKTPAQLRLEFQSRQWDRVVAFQTRNPMHRAHRELTVRAAREANAKVLIHPVVGLTKPGDIDHHTRVRVYQEIIKRYPNGIAFLSLLPLAMRMSGDREAVWHAIIRKNYGASHFIVGRDHAGPGKNSKGVDFYGPYDAQELVESYKHELDIEVVPFRMVTYLPDEDRYAPIDQIDTTKTRTLNISGTELRRRLRVGGEIPEWFSYPEVVKILRESNPPRPKQGFSIVLGNSLTVSREQLSIALLSTFLQFGGGRYYKIFEHNNKTELLSLIQDFIGSGSGLIIPNQWEDDKDSVVGKQNVYLLDTSSSADIQLESADEPISHIVQKVVLFLEDNGFFVF.

The segment at 1–167 (MPAPHGGILQ…LEAIQLPQHY (167 aa)) is N-terminal. The interval 168-393 (DYPGLRKTPA…LRESNPPRPK (226 aa)) is catalytic. A sulfate-binding site is contributed by Gln-195. Residues 195-198 (QTRN) and 289-292 (GRDH) contribute to the ATP site. Residues Thr-196, Arg-197, and Asn-198 contribute to the active site. Residue Arg-197 coordinates sulfate. Residue Ala-293 participates in sulfate binding. Val-331 provides a ligand contact to ATP. Residues 394–511 (QGFSIVLGNS…FLEDNGFFVF (118 aa)) form a required for oligomerization; adenylyl-sulfate kinase-like region.

Belongs to the sulfate adenylyltransferase family. As to quaternary structure, homohexamer. Dimer of trimers.

Its subcellular location is the cytoplasm. The enzyme catalyses sulfate + ATP + H(+) = adenosine 5'-phosphosulfate + diphosphate. It functions in the pathway sulfur metabolism; hydrogen sulfide biosynthesis; sulfite from sulfate: step 1/3. Functionally, catalyzes the first intracellular reaction of sulfate assimilation, forming adenosine-5'-phosphosulfate (APS) from inorganic sulfate and ATP. Plays an important role in sulfate activation as a component of the biosynthesis pathway of sulfur-containing amino acids. This is Sulfate adenylyltransferase from Saccharomyces cerevisiae (strain ATCC 204508 / S288c) (Baker's yeast).